Reading from the N-terminus, the 424-residue chain is Tyrosine--tRNA ligase (424 aa).

Position 37 (Tyr-37) interacts with L-tyrosine. The 'HIGH' region signature appears at 42–51 (PTADSLHLGH). Position 144 is an N6-acetyllysine (Lys-144). Tyr-175 and Gln-179 together coordinate L-tyrosine. A 'KMSKS' region motif is present at residues 235–239 (KFGKT). Residue Lys-238 coordinates ATP. An S4 RNA-binding domain is found at 357 to 414 (ADLMQALVDSELQPSRGQARKTIASNAITINGEKQSDPEYFFKEEDRLFGRFTLLRRG).

The protein belongs to the class-I aminoacyl-tRNA synthetase family. TyrS type 1 subfamily. In terms of assembly, homodimer.

The protein resides in the cytoplasm. The catalysed reaction is tRNA(Tyr) + L-tyrosine + ATP = L-tyrosyl-tRNA(Tyr) + AMP + diphosphate + H(+). Catalyzes the attachment of tyrosine to tRNA(Tyr) in a two-step reaction: tyrosine is first activated by ATP to form Tyr-AMP and then transferred to the acceptor end of tRNA(Tyr). The chain is Tyrosine--tRNA ligase from Escherichia coli O127:H6 (strain E2348/69 / EPEC).